A 208-amino-acid polypeptide reads, in one-letter code: Golgi apparatus membrane protein TVP23 homolog B (208 aa).

N-acetylmethionine is present on methionine 1. A compositionally biased stretch (acidic residues) spans 1–21; that stretch reads MLQQDSNDDTEDVSLFDAEEE. The disordered stretch occupies residues 1–27; sequence MLQQDSNDDTEDVSLFDAEEETTNRPK. The next 4 helical transmembrane spans lie at 34–53, 54–72, 126–146, and 152–172; these read PVASFFHLFFRVSAIIVYLL, CELFSSSFIACMVTIILLL, IFWLGLVACPVLWVVFAFSAL, and KWLAVVIMGVVLQGANLYGYI.

It belongs to the TVP23 family.

The protein resides in the membrane. The sequence is that of Golgi apparatus membrane protein TVP23 homolog B (TVP23B) from Bos taurus (Bovine).